The chain runs to 261 residues: Matrix metalloproteinase-26 (261 aa).

Residues 1-17 (MQLVILRVTIFLPWCFA) form the signal peptide. Positions 18–89 (VPVPPAADHK…PHCGVPDGSD (72 aa)) are excised as a propeptide. The N-linked (GlcNAc...) asparagine glycan is linked to Asn64. The Cysteine switch signature appears at 80–87 (PHCGVPDG). Residues Cys82 and His208 each coordinate Zn(2+). Glu209 is a catalytic residue. Zn(2+)-binding residues include His212 and His218. Asn221 is a glycosylation site (N-linked (GlcNAc...) asparagine).

Belongs to the peptidase M10A family. The cofactor is Zn(2+). Ca(2+) is required as a cofactor. Expressed specifically in uterus and placenta. Is also widely expressed in malignant tumors from different sources as well as in diverse tumor cell lines.

It is found in the secreted. It localises to the extracellular space. The protein localises to the extracellular matrix. Its function is as follows. May hydrolyze collagen type IV, fibronectin, fibrinogen, beta-casein, type I gelatin and alpha-1 proteinase inhibitor. Is also able to activate progelatinase B. The chain is Matrix metalloproteinase-26 (MMP26) from Homo sapiens (Human).